We begin with the raw amino-acid sequence, 241 residues long: Ureidoacrylate amidohydrolase RutB (241 aa).

Asp38 (proton acceptor) is an active-site residue. The active site involves Lys147. Residue Cys180 is the Nucleophile of the active site.

The protein belongs to the isochorismatase family. RutB subfamily.

The catalysed reaction is (Z)-3-ureidoacrylate + H2O + H(+) = (Z)-3-aminoacrylate + NH4(+) + CO2. It catalyses the reaction (Z)-3-ureidoacrylate + H2O = (Z)-3-aminoacrylate + carbamate + H(+). It carries out the reaction (Z)-2-methylureidoacrylate + H2O + H(+) = (Z)-2-methylaminoacrylate + NH4(+) + CO2. In terms of biological role, hydrolyzes ureidoacrylate to form aminoacrylate and carbamate. The carbamate hydrolyzes spontaneously, thereby releasing one of the nitrogen atoms of the pyrimidine ring as ammonia and one of its carbon atoms as CO2. This is Ureidoacrylate amidohydrolase RutB from Haliangium ochraceum (strain DSM 14365 / JCM 11303 / SMP-2).